The chain runs to 166 residues: UPF0304 protein VF_1794 (166 aa).

Belongs to the UPF0304 family.

The sequence is that of UPF0304 protein VF_1794 from Aliivibrio fischeri (strain ATCC 700601 / ES114) (Vibrio fischeri).